Here is a 464-residue protein sequence, read N- to C-terminus: GDNF family receptor alpha-2 (464 aa).

The signal sequence occupies residues 1–21; the sequence is MILANVFCLFFFLDETLRSLA. 11 cysteine pairs are disulfide-bonded: C40-C93, C95-C105, C161-C222, C168-C174, C185-C200, C195-C241, C224-C229, C251-C323, C258-C264, C275-C293, and C285-C347. A glycan (N-linked (GlcNAc...) asparagine) is linked at N52. N357 is a glycosylation site (N-linked (GlcNAc...) asparagine). Residues 363-392 are disordered; the sequence is VSPKGPSFQATQAPRVEKTPSLPDDLSDST. Residues 381–392 are compositionally biased toward low complexity; the sequence is TPSLPDDLSDST. N-linked (GlcNAc...) asparagine glycosylation occurs at N413. The GPI-anchor amidated serine moiety is linked to residue S444. Positions 445 to 464 are cleaved as a propeptide — removed in mature form; the sequence is RARPSAALTVLSVLMLKLAL.

This sequence belongs to the GDNFR family. In terms of assembly, interacts with NRTN ligand and RET: forms a 2:2:2 ternary complex composed of NRTN ligand, GFRA2 and RET receptor. Also forms a 4:4:4 tetrameric complex composed of 4 copies of NRTN ligand, GFRA2 and RET receptor, which prevents endocytosis of RET. Interacts with SORL1. In terms of tissue distribution, found in both brain and placenta.

The protein resides in the cell membrane. Receptor for neurturin (NRTN), a growth factor that supports the survival of sympathetic neurons. NRTN-binding leads to autophosphorylation and activation of the RET receptor. Also able to mediate GDNF signaling through the RET tyrosine kinase receptor. Its function is as follows. Participates in NRTN-induced 'Ser-727' phosphorylation of STAT3. The sequence is that of GDNF family receptor alpha-2 (GFRA2) from Homo sapiens (Human).